The chain runs to 257 residues: Acetylglutamate kinase (257 aa).

Residues 41 to 42, arginine 63, and asparagine 156 each bind substrate; that span reads GG.

This sequence belongs to the acetylglutamate kinase family. ArgB subfamily.

Its subcellular location is the cytoplasm. It catalyses the reaction N-acetyl-L-glutamate + ATP = N-acetyl-L-glutamyl 5-phosphate + ADP. It functions in the pathway amino-acid biosynthesis; L-arginine biosynthesis; N(2)-acetyl-L-ornithine from L-glutamate: step 2/4. In terms of biological role, catalyzes the ATP-dependent phosphorylation of N-acetyl-L-glutamate. The sequence is that of Acetylglutamate kinase from Geobacillus sp. (strain WCH70).